Consider the following 425-residue polypeptide: UPF0229 protein YE2273 (425 aa).

The segment at 84–110 is disordered; the sequence is TNDRIERPQGGGGGSGSGQGNAGQDGE. Gly residues predominate over residues 92 to 108; it reads QGGGGGSGSGQGNAGQD.

Belongs to the UPF0229 family.

The protein is UPF0229 protein YE2273 of Yersinia enterocolitica serotype O:8 / biotype 1B (strain NCTC 13174 / 8081).